A 223-amino-acid polypeptide reads, in one-letter code: RNA pyrophosphohydrolase (223 aa).

Positions 6 to 149 constitute a Nudix hydrolase domain; sequence GFRPNVGIIL…KRGVYEMALT (144 aa). Residues 38 to 59 carry the Nudix box motif; that stretch reads GGIDRGESPEQAMFRELHEEVG. Residues 175 to 223 form a disordered region; it reads ERHMPDGGAPAGLDLPPGGSFDPHPDITSASDDPSPPPHNKAPFLPSQR. Residues 180 to 193 are compositionally biased toward low complexity; the sequence is DGGAPAGLDLPPGG.

Belongs to the Nudix hydrolase family. RppH subfamily. The cofactor is a divalent metal cation.

Accelerates the degradation of transcripts by removing pyrophosphate from the 5'-end of triphosphorylated RNA, leading to a more labile monophosphorylated state that can stimulate subsequent ribonuclease cleavage. The chain is RNA pyrophosphohydrolase from Variovorax paradoxus (strain S110).